Here is a 122-residue protein sequence, read N- to C-terminus: MAAPVDLELKKAFTELQAKVIDTQQKVKLADVQIEQLNRTKKHAHLTDTEIMTLVDETNMYEGVGRMFILQSKEAIHNQLLEKQKIAEEKIKELEQKKSYLERSVKEAEDNIREMLMARRAQ.

Alanine 2 carries the N-acetylalanine modification.

The protein belongs to the prefoldin subunit beta family. Heterohexamer of two PFD-alpha type and four PFD-beta type subunits.

In terms of biological role, binds specifically to cytosolic chaperonin (c-CPN) and transfers target proteins to it. Binds to nascent polypeptide chain and promotes folding in an environment in which there are many competing pathways for nonnative proteins. The protein is Prefoldin subunit 1 (PFDN1) of Bos taurus (Bovine).